The primary structure comprises 314 residues: MTRKQTPMTLALCALGLFAASAASALAADAPMAPPKSEINAAVGTGAKFTPPPESAIPDDDFGKMVKLGRDIMLDTPKYAKDYVGNTLSCVNCHTDAGRMAGSAPLWAAYVSYPAYRGKNKKVNTFEERLQGCFKFSQNGKAPPLGSKTLVALESYSYWLSKGLPVDEKVAGRGYPNLPEPQQAPDYVRGQKVYEAKCILCHAANGEGQYVNGETVFPPLWGPKSFNWGAGMGSYKNAAKFIYANMPYGMSYSLSPQEAWDVAYFMDAQERPQDPRWQGSVAATRAKFHDSKFSLYGTKVNGKLLGDIGAPKPR.

The first 27 residues, 1–27 (MTRKQTPMTLALCALGLFAASAASALA), serve as a signal peptide directing secretion. Cytochrome c domains follow at residues 58 to 192 (PDDD…RGQK) and 185 to 270 (PDYV…DAQE). Heme c is bound by residues Cys90, Cys93, His94, Cys198, Cys201, and His202.

Monomer. Binds 2 heme c groups covalently per subunit.

The protein localises to the periplasm. The catalysed reaction is 2 thiosulfate + 2 Fe(III)-[cytochrome c] = tetrathionate + 2 Fe(II)-[cytochrome c] + 2 H(+). Functionally, catalyzes the oxidation of 2 molecules of thiosulfate to tetrathionate, using TsdB as an electron acceptor. In Thiomonas intermedia (strain K12) (Thiobacillus intermedius), this protein is Thiosulfate dehydrogenase (tsdA).